A 419-amino-acid polypeptide reads, in one-letter code: Vacuolar aspartic protease (419 aa).

The signal sequence occupies residues 1-22 (MQLSLSALTTVALALTSSLVDA). Residues 104-415 (YFTEIQIGTP…DLDKNAVGLA (312 aa)) form the Peptidase A1 domain. Asp-122 is an active-site residue. An intrachain disulfide couples Cys-135 to Cys-140. An N-linked (GlcNAc...) asparagine glycan is attached at Asn-157. The active site involves Asp-307. A disulfide bridge connects residues Cys-341 and Cys-374. Residue Asn-358 is glycosylated (N-linked (GlcNAc...) asparagine). A Microbody targeting signal motif is present at residues 417–419 (TKV).

It belongs to the peptidase A1 family.

It localises to the vacuole. The protein is Vacuolar aspartic protease (APR1) of Candida albicans (Yeast).